Reading from the N-terminus, the 1072-residue chain is DNA-directed RNA polymerase subunit beta (1072 aa).

This sequence belongs to the RNA polymerase beta chain family. In plastids the minimal PEP RNA polymerase catalytic core is composed of four subunits: alpha, beta, beta', and beta''. When a (nuclear-encoded) sigma factor is associated with the core the holoenzyme is formed, which can initiate transcription.

It is found in the plastid. It localises to the chloroplast. It catalyses the reaction RNA(n) + a ribonucleoside 5'-triphosphate = RNA(n+1) + diphosphate. Functionally, DNA-dependent RNA polymerase catalyzes the transcription of DNA into RNA using the four ribonucleoside triphosphates as substrates. This chain is DNA-directed RNA polymerase subunit beta, found in Lobularia maritima (Sweet alyssum).